We begin with the raw amino-acid sequence, 258 residues long: uncharacterized protein (258 aa).

In terms of domain architecture, HTH deoR-type spans 3 to 58 (VAERQQKIVEIVNMRSSIRVSELSDIFSVTEETIRRDLEKLEKEHKLSRSHGGAVS). The H-T-H motif DNA-binding region spans 20–39 (IRVSELSDIFSVTEETIRRD).

This is an uncharacterized protein from Bacillus subtilis (strain 168).